Consider the following 506-residue polypeptide: MDAPNPKRPCLVPLGTSSIENPCSLPIAPDFNQSNIDLTISSFLSLSDLPLFSLPLSIGCSFDRVLDNVIPSIAGTSRDEFDQDRFLDRTLQLASLLYKSTKRCIRKRATLQNSTSWPLLPELTIKVFSMLDTKSLMQASACCTMFNKCAMDRVCYSHIDLTTAAEDVDNGVVCVMIHRAGKELRSLKLGSISSSAEPTTSLLTRSCLTPLTFNHGFTGGHLRSLHLYHLRMIDCGSLSPVLSACLNLTDLKIVGLDNPLEQLGLLTRNCRLIEHLFIEIYGAAGLITDSSLLEFAANCPNLSSISLLGFLLNDAILQKLIKGFRRLKHINLSSSPEISGCFFRGLELCGKDSPLETLILRDCYILKESEVLLFLNSLLAGDFKYIRLIDVSNVDGLVCDGGNRTFEPRFPIEELKKQRSNVTFVAIFESQSSLSSSRFPLEELNKERPGLTFVAEFRSPSPSESDVRSPSPSSSSDSSSSSDSSSSSSSGESSDESGTEEEEDED.

Positions 115-161 (TSWPLLPELTIKVFSMLDTKSLMQASACCTMFNKCAMDRVCYSHIDL) constitute an F-box domain. The disordered stretch occupies residues 452 to 506 (TFVAEFRSPSPSESDVRSPSPSSSSDSSSSSDSSSSSSSGESSDESGTEEEEDED). The segment covering 459 to 492 (SPSPSESDVRSPSPSSSSDSSSSSDSSSSSSSGE) has biased composition (low complexity). Acidic residues predominate over residues 493–506 (SSDESGTEEEEDED).

This is F-box protein At4g02760 from Arabidopsis thaliana (Mouse-ear cress).